The primary structure comprises 299 residues: UBX domain-containing protein 1 (299 aa).

Disordered stretches follow at residues 39-61 (AGVPMETDAPAQAAPGAADSGAP), 127-176 (KAKL…NEDE), and 191-218 (EARKAKASGQPVPEAKPAPSAAPVAPPK). Over residues 46–61 (DAPAQAAPGAADSGAP) the composition is skewed to low complexity. Residues 111–179 (AKVLEIREKI…REKNEDEIAR (69 aa)) adopt a coiled-coil conformation. Residues 128–176 (AKLEAEENREKEKKRREDGKAMISHKEAARDREIREAAQDRRREKNEDE) are compositionally biased toward basic and acidic residues. The segment covering 201-213 (PVPEAKPAPSAAP) has biased composition (low complexity). The UBX domain maps to 218-295 (KDYSTTTLQF…NLVPSANVIL (78 aa)).

As to quaternary structure, interacts with cdc-48.1 (via N-terminus) and cdc-48.2 (via N-terminus) in vitro; the interaction with cdc-48.1 is not detected in vivo. Expressed in the germline (at protein level). Expressed in spermatocytes but not in mature sperm (at protein level). Ubiquitously expressed. Predominantly expressed in the spermatheca.

The protein resides in the cytoplasm. It localises to the perinuclear region. In terms of biological role, ubiquitin-binding protein which acts as an adapter for ATPase cdc-48.1 and/or cdc-48.2, conferring substrate specificity. Together with ubxn-2 and ubxn-3, plays a role in hermaphrodite spermatogenesis probably by promoting the degradation of sex determination terminal factor tra-1. In Caenorhabditis elegans, this protein is UBX domain-containing protein 1.